Here is a 335-residue protein sequence, read N- to C-terminus: MKLSDFDYYLPEELIAQTPAEPRDSSRLMVLNRKEKTIEHRIFRDIVEYLKPGDLLVRNITKVIPARLYGVKETGARVEILLLEKISEGVWEALVKPGSKVKKGTKIILSEGVEVICKDYSQQGARILEFNCSDDKLFELGNAPLPPYIKNQKVPFERYQTVYSKETGSVAAPTAGLHFTEELLERLRNKGLEFADLILHVGLGTFRPVKVEDIREHKMHSERYYVPAETVKKIRETRKNKGRIIAVGTTSVRTLETIARLPNQESYHGKTDIFIYPPFEFKLTDAIITNFHLPKSTLLMLVAAFAGKDFILEAYNTAVKMKYRFFSLGDACFIY.

This sequence belongs to the QueA family. As to quaternary structure, monomer.

It is found in the cytoplasm. The catalysed reaction is 7-aminomethyl-7-carbaguanosine(34) in tRNA + S-adenosyl-L-methionine = epoxyqueuosine(34) in tRNA + adenine + L-methionine + 2 H(+). It functions in the pathway tRNA modification; tRNA-queuosine biosynthesis. Functionally, transfers and isomerizes the ribose moiety from AdoMet to the 7-aminomethyl group of 7-deazaguanine (preQ1-tRNA) to give epoxyqueuosine (oQ-tRNA). This Thermosipho africanus (strain TCF52B) protein is S-adenosylmethionine:tRNA ribosyltransferase-isomerase.